Consider the following 183-residue polypeptide: Negative modulator of initiation of replication (183 aa).

Residues 90–91 (AV) form an interaction with DNA region.

Belongs to the SeqA family. In terms of assembly, homodimer. Polymerizes to form helical filaments.

It localises to the cytoplasm. In terms of biological role, negative regulator of replication initiation, which contributes to regulation of DNA replication and ensures that replication initiation occurs exactly once per chromosome per cell cycle. Binds to pairs of hemimethylated GATC sequences in the oriC region, thus preventing assembly of replication proteins and re-initiation at newly replicated origins. Repression is relieved when the region becomes fully methylated. In Shewanella oneidensis (strain ATCC 700550 / JCM 31522 / CIP 106686 / LMG 19005 / NCIMB 14063 / MR-1), this protein is Negative modulator of initiation of replication.